Here is a 510-residue protein sequence, read N- to C-terminus: Amidophosphoribosyltransferase (510 aa).

The Nucleophile role is filled by Cys-2. Positions 2-239 (CGILGIVLAN…PGEAVIIPKN (238 aa)) constitute a Glutamine amidotransferase type-2 domain. Mg(2+) is bound by residues Asp-373 and Asp-374.

It in the C-terminal section; belongs to the purine/pyrimidine phosphoribosyltransferase family. It depends on Mg(2+) as a cofactor.

The catalysed reaction is 5-phospho-beta-D-ribosylamine + L-glutamate + diphosphate = 5-phospho-alpha-D-ribose 1-diphosphate + L-glutamine + H2O. Its pathway is purine metabolism; IMP biosynthesis via de novo pathway; N(1)-(5-phospho-D-ribosyl)glycinamide from 5-phospho-alpha-D-ribose 1-diphosphate: step 1/2. In Saccharomyces cerevisiae (strain ATCC 204508 / S288c) (Baker's yeast), this protein is Amidophosphoribosyltransferase (ADE4).